Reading from the N-terminus, the 274-residue chain is Cytochrome b-c1 complex subunit Rieske, mitochondrial (274 aa).

The interval 29-49 (XXXXXXXXTPEPPVLDPKRPI) is disordered. Residues 79-103 (SHTDIKVPDFSDYRRSEVLDKTKSS) lie on the Mitochondrial matrix side of the membrane. A helical transmembrane segment spans residues 104–140 (RESSDARKVFSYMVTATTAVGVTYAAKSIVTQFISSM). The Mitochondrial intermembrane portion of the chain corresponds to 141 to 274 (SASADVLAMS…FLSDDMVVVG (134 aa)). The Rieske domain occupies 187–272 (EAAVELSQLR…YEFLSDDMVV (86 aa)). Residues Cys-217, His-219, Cys-236, His-239, and Ser-241 each contribute to the [2Fe-2S] cluster site. Cysteines 222 and 238 form a disulfide.

Belongs to the Rieske iron-sulfur protein family. Component of the ubiquinol-cytochrome c oxidoreductase (cytochrome b-c1 complex, complex III, CIII), a multisubunit enzyme composed of 11 subunits. The complex is composed of 3 respiratory subunits cytochrome b, cytochrome c1 and Rieske protein UQCRFS1, 2 core protein subunits UQCRC1/QCR1 and UQCRC2/QCR2, and 6 low-molecular weight protein subunits UQCRH/QCR6, UQCRB/QCR7, UQCRQ/QCR8, UQCR10/QCR9, UQCR11/QCR10 and subunit 9, the cleavage product of Rieske protein UQCRFS1. The complex exists as an obligatory dimer and forms supercomplexes (SCs) in the inner mitochondrial membrane with NADH-ubiquinone oxidoreductase (complex I, CI) and cytochrome c oxidase (complex IV, CIV), resulting in different assemblies (supercomplex SCI(1)III(2)IV(1) and megacomplex MCI(2)III(2)IV(2)). Incorporation of the Rieske protein UQCRFS1 is the penultimate step in complex III assembly. Interacts with TTC19, which is involved in the clearance of UQCRFS1 fragments. As to quaternary structure, component of the ubiquinol-cytochrome c oxidoreductase (cytochrome b-c1 complex, complex III, CIII). Subunit 9 corresponds to the mitochondrial targeting sequence (MTS) of Rieske protein UQCRFS1. It is retained after processing and incorporated inside complex III, where it remains bound to the complex and localizes between the 2 core subunits UQCRC1/QCR1 and UQCRC2/QCR2. [2Fe-2S] cluster serves as cofactor. Proteolytic processing is necessary for the correct insertion of UQCRFS1 in the complex III dimer. Several fragments are generated during UQCRFS1 insertion, most probably due to the endogenous matrix-processing peptidase (MPP) activity of the 2 core protein subunits UQCRC1/QCR1 and UQCRC2/QCR2, which are homologous to the 2 mitochondrial-processing peptidase (MPP) subunits beta-MPP and alpha-MPP respectively. The action of the protease is also necessary for the clearance of the UQCRFS1 fragments.

It is found in the mitochondrion inner membrane. The enzyme catalyses a quinol + 2 Fe(III)-[cytochrome c](out) = a quinone + 2 Fe(II)-[cytochrome c](out) + 2 H(+)(out). In terms of biological role, component of the ubiquinol-cytochrome c oxidoreductase, a multisubunit transmembrane complex that is part of the mitochondrial electron transport chain which drives oxidative phosphorylation. The respiratory chain contains 3 multisubunit complexes succinate dehydrogenase (complex II, CII), ubiquinol-cytochrome c oxidoreductase (cytochrome b-c1 complex, complex III, CIII) and cytochrome c oxidase (complex IV, CIV), that cooperate to transfer electrons derived from NADH and succinate to molecular oxygen, creating an electrochemical gradient over the inner membrane that drives transmembrane transport and the ATP synthase. The cytochrome b-c1 complex catalyzes electron transfer from ubiquinol to cytochrome c, linking this redox reaction to translocation of protons across the mitochondrial inner membrane, with protons being carried across the membrane as hydrogens on the quinol. In the process called Q cycle, 2 protons are consumed from the matrix, 4 protons are released into the intermembrane space and 2 electrons are passed to cytochrome c. The Rieske protein is a catalytic core subunit containing a [2Fe-2S] iron-sulfur cluster. It cycles between 2 conformational states during catalysis to transfer electrons from the quinol bound in the Q(0) site in cytochrome b to cytochrome c1. Incorporation of UQCRFS1 is the penultimate step in complex III assembly. Its function is as follows. Component of the ubiquinol-cytochrome c oxidoreductase (cytochrome b-c1 complex, complex III, CIII). UQCRFS1 undergoes proteolytic processing once it is incorporated in the complex III dimer. One of the fragments, called subunit 9, corresponds to its mitochondrial targeting sequence (MTS). The proteolytic processing is necessary for the correct insertion of UQCRFS1 in the complex III dimer, but the persistence of UQCRFS1-derived fragments may prevent newly imported UQCRFS1 to be processed and assembled into complex III and is detrimental for the complex III structure and function. This Saimiri sciureus (Common squirrel monkey) protein is Cytochrome b-c1 complex subunit Rieske, mitochondrial (UQCRFS1).